Reading from the N-terminus, the 396-residue chain is Chaperone protein DnaJ (396 aa).

The region spanning 6-71 (DYYEVLEVTK…DKRSRYDQFG (66 aa)) is the J domain. A CR-type zinc finger spans residues 154 to 236 (GVEKKFKLKK…CGGDGIVYGE (83 aa)). Zn(2+) contacts are provided by C167, C170, C184, C187, C210, C213, C224, and C227. CXXCXGXG motif repeat units lie at residues 167 to 174 (CNHCHGTG), 184 to 191 (CPTCKGSG), 210 to 217 (CPTCNGEG), and 224 to 231 (CKECGGDG).

Belongs to the DnaJ family. As to quaternary structure, homodimer. Zn(2+) is required as a cofactor.

Its subcellular location is the cytoplasm. In terms of biological role, participates actively in the response to hyperosmotic and heat shock by preventing the aggregation of stress-denatured proteins and by disaggregating proteins, also in an autonomous, DnaK-independent fashion. Unfolded proteins bind initially to DnaJ; upon interaction with the DnaJ-bound protein, DnaK hydrolyzes its bound ATP, resulting in the formation of a stable complex. GrpE releases ADP from DnaK; ATP binding to DnaK triggers the release of the substrate protein, thus completing the reaction cycle. Several rounds of ATP-dependent interactions between DnaJ, DnaK and GrpE are required for fully efficient folding. Also involved, together with DnaK and GrpE, in the DNA replication of plasmids through activation of initiation proteins. The sequence is that of Chaperone protein DnaJ from Bacteroides thetaiotaomicron (strain ATCC 29148 / DSM 2079 / JCM 5827 / CCUG 10774 / NCTC 10582 / VPI-5482 / E50).